A 292-amino-acid chain; its full sequence is Ubiquinone biosynthesis protein UbiV (292 aa).

[4Fe-4S] cluster contacts are provided by cysteine 39, cysteine 180, cysteine 193, and cysteine 197.

The protein belongs to the peptidase U32 family. UbiV subfamily. Forms a heterodimer with UbiU. It depends on [4Fe-4S] cluster as a cofactor.

Its pathway is cofactor biosynthesis; ubiquinone biosynthesis. Its function is as follows. Required for O(2)-independent ubiquinone (coenzyme Q) biosynthesis. Together with UbiU, is essential for the C6-hydroxylation reaction in the oxygen-independent ubiquinone biosynthesis pathway. This is Ubiquinone biosynthesis protein UbiV from Escherichia coli (strain K12).